The chain runs to 221 residues: Very-long-chain (3R)-3-hydroxyacyl-CoA dehydratase PASTICCINO 2 (221 aa).

Topologically, residues 1–11 (MAGFLSVVRRV) are cytoplasmic. Residues 12-32 (YLTLYNWIVFAGWAQVLYLAI) form a helical membrane-spanning segment. Residues 33–51 (TTLKETGYENVYDAIEKPL) are Lumenal-facing. Residues 52-70 (QLAQTAAVLEILHGLVGLV) traverse the membrane as a helical segment. Residues 71 to 76 (RSPVSA) lie on the Cytoplasmic side of the membrane. The chain crosses the membrane as a helical span at residues 77 to 95 (TLPQIGSRLFLTWGILYSF). The Lumenal segment spans residues 96–100 (PEVRS). A helical membrane pass occupies residues 101–122 (HFLVTSLVISWSITEIIRYSFF). The Cytoplasmic portion of the chain corresponds to 123–142 (GFKEALGFAPSWHLWLRYSS). Residues 143 to 165 (FLLLYPTGITSEVGLIYLALPHI) traverse the membrane as a helical segment. Residues tyrosine 147 and glutamate 154 contribute to the active site. At 166 to 184 (KTSEMYSVRMPNILNFSFD) the chain is on the lumenal side. A helical transmembrane segment spans residues 185–204 (FFYATILVLAIYVPGSPHMY). At 205 to 221 (RYMLGQRKRALSKSKRE) the chain is on the cytoplasmic side.

Belongs to the very long-chain fatty acids dehydratase HACD family. In terms of assembly, interacts with CDKA-1; but only with the 'Tyr-15' phosphorylated protein. Interacts with PAS1. Part of the fatty acid elongase complex which contains a beta-ketoacyl-CoA synthase (KCS), a beta-ketoacyl-CoA reductase (KCR), a beta-hydroxyacyl-CoA dehydratase (HCD) and an enoyl-CoA reductase (ECR). In terms of tissue distribution, high expression in young seedlings, roots, root tips, flowers and young siliques. Lower levels in leaves and stems.

It localises to the endoplasmic reticulum membrane. The protein localises to the cytoplasm. Its subcellular location is the nucleus. It catalyses the reaction a very-long-chain (3R)-3-hydroxyacyl-CoA = a very-long-chain (2E)-enoyl-CoA + H2O. Its pathway is lipid metabolism; fatty acid biosynthesis. Its function is as follows. Catalyzes the third of the four reactions of the long-chain fatty acids elongation cycle. This endoplasmic reticulum-bound enzymatic process, allows the addition of two carbons to the chain of long- and very long-chain fatty acids/VLCFAs per cycle. This enzyme catalyzes the dehydration of the 3-hydroxyacyl-CoA intermediate into trans-2,3-enoyl-CoA, within each cycle of fatty acid elongation. Thereby, it participates in the production of VLCFAs of different chain lengths that are involved in multiple biological processes as precursors of membrane lipids and lipid mediators. May be an anti-phosphatase that prevents CDKA-1 dephosphorylation and activation. Involved in the hormonal control of cell division and differentiation. Required for proliferation control of meristematic and non-meristematic cells. Negative regulator of the cell cycle. The protein is Very-long-chain (3R)-3-hydroxyacyl-CoA dehydratase PASTICCINO 2 (PAS2) of Arabidopsis thaliana (Mouse-ear cress).